The sequence spans 735 residues: Funoran endo-beta-hydrolase (735 aa).

A signal peptide spans 1 to 27 (MRVKSVYKKLSVSFILVMLSASQEVNS). Glu200 functions as the Proton donor in the catalytic mechanism. The Nucleophile role is filled by Glu322.

This sequence belongs to the glycosyl hydrolase 86 family.

The catalysed reaction is Endohydrolysis of beta-(1-&gt;4)-linkages between beta-D-galactopyranose-6-sulfate and 3,6-anhydro-alpha-L-galactopyranose units in funoran.. It catalyses the reaction Hydrolysis of (1-&gt;4)-beta-D-galactosidic linkages in agarose, giving the tetramer as the predominant product.. Its activity is regulated as follows. Agarase activity is enhanced in the presence of NaCl. Agarase activity is significantly inhibited by Zn(2+) and slightly activated by several divalent ions including Mg(2+), Cd(2+) and Ca(2+). In terms of biological role, endohydrolase that cleaves the beta-1,4 glycosidic bond between beta-D-galactopyranose-6-sulfate (G6S) and 3,6-anhydro-alpha-L-galactopyranose (LA) unit of funoran, a polysaccharide produced by red algae of the genus Gloiopeltis. It releases the disaccharide LA-G6S as the predominant end product. Also acts as a random endo-acting beta-agarase, which can hydrolyze agarose tetrasaccharides and hexasaccharides, and produces disaccharides as smallest products. Besides typical agarose oligosaccharides, it can use methylated galactoses. The enzyme exhibits higher catalytic efficiency towards agarose, but binds funoran preferentially. Has no activity on porphyran. In Wenyingzhuangia aestuarii, this protein is Funoran endo-beta-hydrolase.